Consider the following 724-residue polypeptide: Degenerin mec-10 (724 aa).

The Cytoplasmic segment spans residues 1–125 (MNRGPPNPRM…GQAPNSLYRA (125 aa)). The helical transmembrane segment at 126–146 (VWVFLLLICAIQFINQAVAVI) threads the bilayer. At 147 to 684 (QKYQKMDKIT…FGGHLGLWSG (538 aa)) the chain is on the extracellular side. N-linked (GlcNAc...) asparagine glycans are attached at residues Asn294, Asn370, Asn463, Asn605, and Asn624. Residues 685–705 (VSVMTCCEFVCLVLELLYMAV) form a helical membrane-spanning segment. Residues 706–724 (THHITQERIRRRENAANEF) are Cytoplasmic-facing.

The protein belongs to the amiloride-sensitive sodium channel (TC 1.A.6) family. In terms of assembly, the channel is probably composed of at least the mec-2, mec-4, mec-6 and mec-10 subunits.

The protein resides in the cell membrane. Functionally, amiloride-sensitive sodium channel subunit required for mechanosensory transduction (touch sensitivity). Negatively regulates the turning step of male mating behavior. This is Degenerin mec-10 from Caenorhabditis briggsae.